A 345-amino-acid chain; its full sequence is Molybdopterin synthase catalytic subunit (345 aa).

Substrate contacts are provided by residues 101-102 (HR), Lys-117, and 124-126 (KKE).

It belongs to the MoaE family. MOCS2B subfamily. Heterotetramer; composed of 2 small (Mocs2A) and 2 large (Mocs2B) subunits.

It is found in the cytoplasm. The enzyme catalyses 2 [molybdopterin-synthase sulfur-carrier protein]-C-terminal-Gly-aminoethanethioate + cyclic pyranopterin phosphate + H2O = molybdopterin + 2 [molybdopterin-synthase sulfur-carrier protein]-C-terminal Gly-Gly + 2 H(+). The protein operates within cofactor biosynthesis; molybdopterin biosynthesis. In terms of biological role, catalytic subunit of the molybdopterin synthase complex, a complex that catalyzes the conversion of precursor Z into molybdopterin. Acts by mediating the incorporation of 2 sulfur atoms from thiocarboxylated Mocs2A into precursor Z to generate a dithiolene group. In Drosophila virilis (Fruit fly), this protein is Molybdopterin synthase catalytic subunit.